The sequence spans 165 residues: Phosphopantetheine adenylyltransferase (165 aa).

Serine 10 is a substrate binding site. ATP-binding positions include 10–11 and histidine 18; that span reads SF. Residues lysine 42, threonine 79, and arginine 93 each contribute to the substrate site. Residues 94 to 96, glutamate 104, and 129 to 135 contribute to the ATP site; these read GLR and VRPITAT.

This sequence belongs to the bacterial CoaD family. In terms of assembly, homohexamer. It depends on Mg(2+) as a cofactor.

The protein localises to the cytoplasm. The catalysed reaction is (R)-4'-phosphopantetheine + ATP + H(+) = 3'-dephospho-CoA + diphosphate. It participates in cofactor biosynthesis; coenzyme A biosynthesis; CoA from (R)-pantothenate: step 4/5. Reversibly transfers an adenylyl group from ATP to 4'-phosphopantetheine, yielding dephospho-CoA (dPCoA) and pyrophosphate. The chain is Phosphopantetheine adenylyltransferase from Afipia carboxidovorans (strain ATCC 49405 / DSM 1227 / KCTC 32145 / OM5) (Oligotropha carboxidovorans).